Here is a 708-residue protein sequence, read N- to C-terminus: UvrABC system protein B (708 aa).

Residues 32–419 enclose the Helicase ATP-binding domain; sequence EGIQSGKTAQ…GGEVVEQIIR (388 aa). 45–52 lines the ATP pocket; it reads GATGTGKT. The Beta-hairpin motif lies at 98-121; that stretch reads YYDYYQPEAYIPQRDVYIEKDSSI. Residues 436-598 form the Helicase C-terminal domain; it reads QVTHLLEQVR…IVPKTVRKSI (163 aa). One can recognise a UVR domain in the interval 627–662; it reads IEYVDKLEQEMLAAAEDLEFERAARLRDRVLQLKEH. The disordered stretch occupies residues 668–708; sequence SEVEIVDEKSAGKSGGRGRGRRGAKKKGASKGTKIPRPKRG. The segment covering 683 to 708 has biased composition (basic residues); sequence GRGRGRRGAKKKGASKGTKIPRPKRG.

Belongs to the UvrB family. As to quaternary structure, forms a heterotetramer with UvrA during the search for lesions. Interacts with UvrC in an incision complex.

The protein resides in the cytoplasm. Functionally, the UvrABC repair system catalyzes the recognition and processing of DNA lesions. A damage recognition complex composed of 2 UvrA and 2 UvrB subunits scans DNA for abnormalities. Upon binding of the UvrA(2)B(2) complex to a putative damaged site, the DNA wraps around one UvrB monomer. DNA wrap is dependent on ATP binding by UvrB and probably causes local melting of the DNA helix, facilitating insertion of UvrB beta-hairpin between the DNA strands. Then UvrB probes one DNA strand for the presence of a lesion. If a lesion is found the UvrA subunits dissociate and the UvrB-DNA preincision complex is formed. This complex is subsequently bound by UvrC and the second UvrB is released. If no lesion is found, the DNA wraps around the other UvrB subunit that will check the other stand for damage. This is UvrABC system protein B from Rhodopirellula baltica (strain DSM 10527 / NCIMB 13988 / SH1).